Consider the following 213-residue polypeptide: Glycerol-3-phosphate acyltransferase (213 aa).

Helical transmembrane passes span 3 to 23 (ILLL…LWIG), 55 to 75 (ITFL…IWLG), 80 to 100 (SPLI…FTGF), 110 to 130 (AGVL…VFAL), 142 to 162 (SITA…IHFL), and 163 to 183 (LDGY…VIIF).

The protein belongs to the PlsY family. In terms of assembly, probably interacts with PlsX.

The protein resides in the cell membrane. The enzyme catalyses an acyl phosphate + sn-glycerol 3-phosphate = a 1-acyl-sn-glycero-3-phosphate + phosphate. It functions in the pathway lipid metabolism; phospholipid metabolism. In terms of biological role, catalyzes the transfer of an acyl group from acyl-phosphate (acyl-PO(4)) to glycerol-3-phosphate (G3P) to form lysophosphatidic acid (LPA). This enzyme utilizes acyl-phosphate as fatty acyl donor, but not acyl-CoA or acyl-ACP. This chain is Glycerol-3-phosphate acyltransferase, found in Streptococcus thermophilus (strain CNRZ 1066).